Reading from the N-terminus, the 434-residue chain is MSIITDVYAREVLDSRGNPTLEVEVYTESGAFGRGMVPSGASTGEHEAVELRDGDKSRYGGLGTQKAVDNVNNIIAEAVIGYDVRDQQAIDRAMIALDGTPNKGKLGANAILGVSIAVARAAADYLEIPLYSYLGGFNTKVLPTPMMNIINGGSHSDAPIAFQEFMIVPAGAPTFKEALRWGAEIFHALKKILKSRGLATAVGDEGGFAPRFDGTEDGVETILAAIEAAGYVPGKDVFLGFDCASSEFYDKERKVYDYTKFEGEGAAVRTADEQIDYLEELVNKYPIITIEDGMDENDWDGWKKLTERLGKKVQPVGDDFFVTNTSYLEKGINEACANSILIKVNQIGTLTETFDAIEMAKEAGYTAVVSHRSGETEDSTIADIAVAANAGQIKTGSLSRTDRIAKYNQLLRIEDQLGEVAEYRGLKSFYNLSK.

A (2R)-2-phosphoglycerate-binding site is contributed by Q163. The active-site Proton donor is the E205. Mg(2+)-binding residues include D242, E291, and D318. Residues K343, R372, S373, and K394 each coordinate (2R)-2-phosphoglycerate. K343 serves as the catalytic Proton acceptor.

This sequence belongs to the enolase family. Requires Mg(2+) as cofactor.

It is found in the cytoplasm. It localises to the secreted. The protein localises to the cell surface. It carries out the reaction (2R)-2-phosphoglycerate = phosphoenolpyruvate + H2O. The protein operates within carbohydrate degradation; glycolysis; pyruvate from D-glyceraldehyde 3-phosphate: step 4/5. Functionally, catalyzes the reversible conversion of 2-phosphoglycerate (2-PG) into phosphoenolpyruvate (PEP). It is essential for the degradation of carbohydrates via glycolysis. The polypeptide is Enolase (Streptococcus intermedius).